The chain runs to 347 residues: Ceramide very long chain fatty acid hydroxylase scs7 (347 aa).

Over 1–156 the chain is Cytoplasmic; that stretch reads MASVTSEKCV…GNFLEPLTKT (156 aa). Residues 157–177 form a helical membrane-spanning segment; it reads PWYMIPLIWVPCVTYGFLYAC. Threonine 178 is a topological domain (lumenal). The helical transmembrane segment at 179–199 threads the bilayer; sequence GIPFSVAITFFIIGLFTWTLV. The Cytoplasmic portion of the chain corresponds to 200–238; the sequence is EYTMHRFLFHLDEYTPDHPIFLTMHFAFHGCHHFLPADK. Zn(2+) is bound by residues histidine 204, histidine 209, histidine 228, histidine 231, and histidine 232. Residues 239-259 form a helical membrane-spanning segment; it reads YRLVMPPALFLIFATPWYHFI. Position 260 (glutamine 260) is a topological domain, lumenal. The helical transmembrane segment at 261–281 threads the bilayer; that stretch reads LVLPHYIGVAGFSGAILGYVF. The Cytoplasmic segment spans residues 282–347; sequence YDLTHYFLHH…EQGKISTKAK (66 aa). Histidine 286, histidine 290, histidine 306, histidine 309, and histidine 310 together coordinate Zn(2+).

The protein belongs to the sterol desaturase family. SCS7 subfamily. It depends on Zn(2+) as a cofactor.

It localises to the endoplasmic reticulum membrane. It functions in the pathway sphingolipid metabolism. Its function is as follows. Ceramide hydroxylase involved in the hydroxylation of sphingolipid-associated very long chain fatty acids. Postulated to hydroxylate the very long chain fatty acid of dihydroceramides and phytoceramides at C-2. This is Ceramide very long chain fatty acid hydroxylase scs7 from Schizosaccharomyces pombe (strain 972 / ATCC 24843) (Fission yeast).